Reading from the N-terminus, the 487-residue chain is Calcium-binding tyrosine phosphorylation-regulated protein (487 aa).

The region spanning 12-49 is the RIIa domain; the sequence is YGLKTLLEGISRAVLKTNPSDINQFAAAYFQELTMYRG. Basic and acidic residues-rich tracts occupy residues 78-91 and 101-117; these read KKLE…KTSV and KSTD…EYSD. 3 disordered regions span residues 78-163, 243-271, and 420-487; these read KKLE…AVSP, VDLG…QEPP, and IVSD…ATAE. Positions 140 to 152 are enriched in low complexity; sequence SSSKPATPKATTP. Composition is skewed to polar residues over residues 420–436 and 455–464; these read IVSD…NSVP and SGTSVKSSSG. Acidic residues predominate over residues 478–487; it reads IEPEGEATAE.

In terms of assembly, interacts with FSCB. Phosphorylated on tyrosine residues during in vitro capacitation. Dephosphorylation affects its ability to bind calcium.

Its subcellular location is the cytoplasm. It localises to the cytoskeleton. The protein resides in the cell projection. It is found in the cilium. The protein localises to the flagellum. Its function is as follows. May function as a regulator of both motility- and head-associated functions such as capacitation and the acrosome reaction. May bind calcium in vitro. This Macaca fascicularis (Crab-eating macaque) protein is Calcium-binding tyrosine phosphorylation-regulated protein (CABYR).